We begin with the raw amino-acid sequence, 227 residues long: Cytochrome c oxidase subunit 2 (227 aa).

The Mitochondrial intermembrane portion of the chain corresponds to 1–14; the sequence is MAYPVQLGFQDAAS. Residues 15–45 form a helical membrane-spanning segment; sequence PIMEELLYFHDHTLMIVFLISSLVLYIISLM. Topologically, residues 46-59 are mitochondrial matrix; that stretch reads LTTKLMHTSTMDAQ. The helical transmembrane segment at 60 to 87 threads the bilayer; that stretch reads EVETVWTILPAIILILIALPSLRILYMM. Residues 88–227 lie on the Mitochondrial intermembrane side of the membrane; the sequence is DEITTPSLTL…HFEEWLLSMF (140 aa). Residues His-161, Cys-196, Glu-198, Cys-200, His-204, and Met-207 each contribute to the Cu cation site. Glu-198 provides a ligand contact to Mg(2+).

This sequence belongs to the cytochrome c oxidase subunit 2 family. As to quaternary structure, component of the cytochrome c oxidase (complex IV, CIV), a multisubunit enzyme composed of 14 subunits. The complex is composed of a catalytic core of 3 subunits MT-CO1, MT-CO2 and MT-CO3, encoded in the mitochondrial DNA, and 11 supernumerary subunits COX4I, COX5A, COX5B, COX6A, COX6B, COX6C, COX7A, COX7B, COX7C, COX8 and NDUFA4, which are encoded in the nuclear genome. The complex exists as a monomer or a dimer and forms supercomplexes (SCs) in the inner mitochondrial membrane with NADH-ubiquinone oxidoreductase (complex I, CI) and ubiquinol-cytochrome c oxidoreductase (cytochrome b-c1 complex, complex III, CIII), resulting in different assemblies (supercomplex SCI(1)III(2)IV(1) and megacomplex MCI(2)III(2)IV(2)). Found in a complex with TMEM177, COA6, COX18, COX20, SCO1 and SCO2. Interacts with TMEM177 in a COX20-dependent manner. Interacts with COX20. Interacts with COX16. Requires Cu cation as cofactor.

It localises to the mitochondrion inner membrane. The enzyme catalyses 4 Fe(II)-[cytochrome c] + O2 + 8 H(+)(in) = 4 Fe(III)-[cytochrome c] + 2 H2O + 4 H(+)(out). Component of the cytochrome c oxidase, the last enzyme in the mitochondrial electron transport chain which drives oxidative phosphorylation. The respiratory chain contains 3 multisubunit complexes succinate dehydrogenase (complex II, CII), ubiquinol-cytochrome c oxidoreductase (cytochrome b-c1 complex, complex III, CIII) and cytochrome c oxidase (complex IV, CIV), that cooperate to transfer electrons derived from NADH and succinate to molecular oxygen, creating an electrochemical gradient over the inner membrane that drives transmembrane transport and the ATP synthase. Cytochrome c oxidase is the component of the respiratory chain that catalyzes the reduction of oxygen to water. Electrons originating from reduced cytochrome c in the intermembrane space (IMS) are transferred via the dinuclear copper A center (CU(A)) of subunit 2 and heme A of subunit 1 to the active site in subunit 1, a binuclear center (BNC) formed by heme A3 and copper B (CU(B)). The BNC reduces molecular oxygen to 2 water molecules using 4 electrons from cytochrome c in the IMS and 4 protons from the mitochondrial matrix. The sequence is that of Cytochrome c oxidase subunit 2 (MT-CO2) from Propithecus tattersalli (Golden-crowned Sifaka).